A 579-amino-acid chain; its full sequence is Trehalase (579 aa).

The first 15 residues, 1 to 15 (MRLFLLLVGLTTVIA), serve as a signal peptide directing secretion. 2 N-linked (GlcNAc...) asparagine glycosylation sites follow: Asn-29 and Asn-58. Substrate-binding positions include Arg-161, 168-169 (WD), Asn-205, 214-216 (RSQ), 279-281 (RPE), and Gly-313. N-linked (GlcNAc...) asparagine glycosylation is present at Asn-205. The active-site Proton donor/acceptor is the Asp-315. N-linked (GlcNAc...) asparagine glycosylation occurs at Asn-331. The Proton donor/acceptor role is filled by Glu-513. Glu-528 contributes to the substrate binding site. Residues 560-569 (DASANNGQSN) show a composition bias toward polar residues. The segment at 560 to 579 (DASANNGQSNEESETDSKEK) is disordered.

It belongs to the glycosyl hydrolase 37 family. In midgut and Malpighian tubules.

The protein localises to the basolateral cell membrane. The enzyme catalyses alpha,alpha-trehalose + H2O = alpha-D-glucose + beta-D-glucose. Its function is as follows. Involved in uptake of hemolymph trehalose into epithelial cells in the midgut of feeding larvae. This chain is Trehalase, found in Bombyx mori (Silk moth).